The chain runs to 573 residues: Cytosolic 5'-nucleotidase 1B (573 aa).

Positions 1–11 (MSQTSLKHKKK) are enriched in basic residues. 2 disordered regions span residues 1-200 (MSQT…PPTE) and 218-238 (EPEY…EEDE). Positions 12–35 (NEPGMRYSKESLDAEKRKDSDKTG) are enriched in basic and acidic residues. Residues 60–73 (NQWSRTSRSPSTGA) are compositionally biased toward polar residues. Positions 93-105 (SSTTSRTSSASPS) are enriched in low complexity. A compositionally biased stretch (polar residues) spans 115–136 (TSEKSSIQQTPQNRPITQLESQ). 2 stretches are compositionally biased toward basic and acidic residues: residues 161–174 (WAHR…DLQL) and 182–194 (DSRE…REYP). Aspartate 428 functions as the Nucleophile in the catalytic mechanism.

Belongs to the 5'-nucleotidase type 3 family. Mg(2+) is required as a cofactor. Expressed at highest levels in testis. Also expressed in brain, skeletal muscle, kidney and heart.

The protein localises to the cytoplasm. It catalyses the reaction a ribonucleoside 5'-phosphate + H2O = a ribonucleoside + phosphate. It carries out the reaction AMP + H2O = adenosine + phosphate. Its activity is regulated as follows. Activated by ADP. In terms of biological role, catalyzes the hydrolysis of nucleotide monophosphates, releasing inorganic phosphate and the corresponding nucleoside, AMP is the major substrate. This Mus musculus (Mouse) protein is Cytosolic 5'-nucleotidase 1B (Nt5c1b).